The following is a 297-amino-acid chain: Phosphatidylglycerol--prolipoprotein diacylglyceryl transferase (297 aa).

3 consecutive transmembrane segments (helical) span residues 17–37 (LAVR…IVVG), 59–79 (MLFY…VLFY), and 97–117 (GGMS…LFAW). Arginine 142 provides a ligand contact to a 1,2-diacyl-sn-glycero-3-phospho-(1'-sn-glycerol). 2 helical membrane-spanning segments follow: residues 230–250 (MGAV…TVEF) and 257–277 (FLGL…PMIV).

The protein belongs to the Lgt family.

Its subcellular location is the cell inner membrane. The enzyme catalyses L-cysteinyl-[prolipoprotein] + a 1,2-diacyl-sn-glycero-3-phospho-(1'-sn-glycerol) = an S-1,2-diacyl-sn-glyceryl-L-cysteinyl-[prolipoprotein] + sn-glycerol 1-phosphate + H(+). It functions in the pathway protein modification; lipoprotein biosynthesis (diacylglyceryl transfer). Functionally, catalyzes the transfer of the diacylglyceryl group from phosphatidylglycerol to the sulfhydryl group of the N-terminal cysteine of a prolipoprotein, the first step in the formation of mature lipoproteins. The sequence is that of Phosphatidylglycerol--prolipoprotein diacylglyceryl transferase from Burkholderia multivorans (strain ATCC 17616 / 249).